Consider the following 249-residue polypeptide: 5'-nucleotidase SurE (249 aa).

A divalent metal cation contacts are provided by Asp-8, Asp-9, Ser-39, and Asn-91.

This sequence belongs to the SurE nucleotidase family. A divalent metal cation serves as cofactor.

The protein localises to the cytoplasm. The catalysed reaction is a ribonucleoside 5'-phosphate + H2O = a ribonucleoside + phosphate. Functionally, nucleotidase that shows phosphatase activity on nucleoside 5'-monophosphates. The protein is 5'-nucleotidase SurE of Pseudomonas fluorescens (strain Pf0-1).